The following is a 482-amino-acid chain: Nicotine dehydrogenase (482 aa).

A signal peptide (tat-type signal) is located at residues 1-38 (MSDKTKTNEGFSRRSFIGSAAVVTAGVAGLGAIDAASA). FAD contacts are provided by Ala-64, Glu-83, Ala-84, Arg-85, Arg-91, Trp-108, and Val-279. Thr-381 is a (S)-nicotine binding site. FAD contacts are provided by Ala-453, Asn-462, and Ile-463.

Belongs to the flavin monoamine oxidase family. As to quaternary structure, monomer in solution. Homodimer in solution. Forms homodimers in the crystal. The cofactor is FAD. Predicted to be exported by the Tat system. The position of the signal peptide cleavage has not been experimentally proven.

It localises to the periplasm. The catalysed reaction is (S)-nicotine + 2 Fe(III)-[cytochrome c] = N-methylmyosmine + 2 Fe(II)-[cytochrome c] + 2 H(+). It participates in alkaloid degradation; nicotine degradation. The catalytic rate is not significantly affected by pH. In terms of biological role, involved in nicotine degradation. Catalyzes the conversion of nicotine to N-methylmyosmine. N-methylmyosmine undergoes spontaneous hydrolysis to form pseudooxynicotine (PN). S-nicotine is the optimal substrate. Has lower activity with some nicotine analogs, but shows no activity towards neurotransmitters, including serotonin, dopamine, and norepinephrine, nicotine metabolites and common neuroactive drugs. The enzyme is stereospecific with poor activity with (R)-nicotine as the substrate. The c-type cytochrome protein CycN is the physiological electron acceptor. O(2) is a poor electron acceptor. This Pseudomonas putida (strain DSM 28022 / S16) protein is Nicotine dehydrogenase.